Consider the following 342-residue polypeptide: N-acetyl-gamma-glutamyl-phosphate reductase (342 aa).

Residue C147 is part of the active site.

This sequence belongs to the NAGSA dehydrogenase family. Type 1 subfamily.

It is found in the cytoplasm. It catalyses the reaction N-acetyl-L-glutamate 5-semialdehyde + phosphate + NADP(+) = N-acetyl-L-glutamyl 5-phosphate + NADPH + H(+). It participates in amino-acid biosynthesis; L-arginine biosynthesis; N(2)-acetyl-L-ornithine from L-glutamate: step 3/4. In terms of biological role, catalyzes the NADPH-dependent reduction of N-acetyl-5-glutamyl phosphate to yield N-acetyl-L-glutamate 5-semialdehyde. The sequence is that of N-acetyl-gamma-glutamyl-phosphate reductase from Methanosphaera stadtmanae (strain ATCC 43021 / DSM 3091 / JCM 11832 / MCB-3).